The following is a 148-amino-acid chain: NADH-ubiquinone oxidoreductase chain 3 (148 aa).

3 helical membrane-spanning segments follow: residues 19–39, 70–90, and 99–119; these read FYMI…YIIT, FILI…ILPY, and IYGL…FIIE.

The protein belongs to the complex I subunit 3 family.

The protein resides in the mitochondrion membrane. The catalysed reaction is a ubiquinone + NADH + 5 H(+)(in) = a ubiquinol + NAD(+) + 4 H(+)(out). In terms of biological role, core subunit of the mitochondrial membrane respiratory chain NADH dehydrogenase (Complex I) that is believed to belong to the minimal assembly required for catalysis. Complex I functions in the transfer of electrons from NADH to the respiratory chain. The immediate electron acceptor for the enzyme is believed to be ubiquinone. This is NADH-ubiquinone oxidoreductase chain 3 (ND3) from Wickerhamomyces canadensis (Yeast).